Here is a 648-residue protein sequence, read N- to C-terminus: Chaperone protein DnaK (648 aa).

A Phosphothreonine; by autocatalysis modification is found at Thr-200. The tract at residues 612 to 631 (QAGAAGAAGAAEGAAQGGAQ) is disordered.

This sequence belongs to the heat shock protein 70 family.

Acts as a chaperone. This Burkholderia multivorans (strain ATCC 17616 / 249) protein is Chaperone protein DnaK.